A 1863-amino-acid chain; its full sequence is MDLSALRVEEVQNVINAMQKILECPICLELIKEPVSTKCDHIFCKFCMLKLLNQKKGPSQCPLCKNDITKRSLQESTRFSQLVEELLKIICAFQLDTGLEYANSYNFAKKENNSPEHLKDEVSIIQSMGYRNRAKRLLQSEPENPSLQETSLSVQLSNLGTVRTLRTKQRIQPQKKSVYIELGSDSSEDTVNKATYCSVGDQELLQITPQGTRDEISLDSAKKAACEFSETDVTNTEHHQPSNNDLNTTEKRATERHPEKYQGSSVSNLHVEPCGTNTHASSLQHENSSLLLTKDRMNVEKAEFCNKSKQPGLARSQHNRWAGSKETCNDRRTPSTEKKVDLNADPLCERKEWNKQKLPCSENPRDTEDVPWITLNSSIQKVNEWFSRSDELLGSDDSHDGGSESNAKVADVLDVLNEVDEYSGSSEKIDLLASDPHEALICKSERVHSKSVESNTEDKIFGKTYRRKASLPNLSHVTENLIIGAFVTEPQIIQERPLTNKLKRKRRATSGLHPEDFIKKADLAVQKTPEMINQGTNQMEQNGQVMNITNSGHENKTKGDSIQNEKNPNPIESLEKESAFKTKAEPISSSISNMELELNIHNSKAPKKNRLRRKSSTRHIHALELVVSRNLSPPNCTELQIDSCSSSEEIKKKKYNQMPVRHSRNLQLMEDKEPATGVKKSNKPNEQTSKRHDSDTFPELKLTNAPGSFTNCSNTSELKEFVNPSLPREEKEEKLETVKVSNNAEDPKDLMLSGERVLQTERSVESSSISLVPGTDYGTQESISLLEVSTLGKAKTEPNKCVSQCAAFENPKGLIHGCSKDTRNDTEGFKYPLGHEVNHSRETSIEMEESELDAQYLQNTFKVSKRQSFALFSNPGNPEEECATFSAHCRSLKKQSPKVTFEREQKEQNQGKNESNIKPVQTVNITAGFPVVCQKDKPVDYAKCSIKGGSRFCLSSQFRGNETGLITPNKHGLLQNPYHIPPLFPIKSFVKTKCKKNLLEENFEEHSMSPEREMGNENIPSTVSTISRNNIRENVFKEASSSNINEVGSSTNEVGSSINEVGSSDENIQAELGRNRGPKLNAMLRLGVLQPEVYKQSLPGSNCKHPEIKKQEYEEVVQTVNTDFSPCLISDNLEQPMGSSHASQVCSETPDDLLDDGEIKEDTSFAENDIKESSAVFSKSVQRGELSRSPSPFTHTHLAQGYRRGAKKLESSEENLSSEDEELPCFQHLLFGKVSNIPSQSTRHSTVATECLSKNTEENLLSLKNSLNDCSNQVILAKASQEHHLSEETKCSASLFSSQCSELEDLTANTNTQDPFLIGSSKQMRHQSESQGVGLSDKELVSDDEERGTGLEENNQEEQSMDSNLGEAASGCESETSVSEDCSGLSSQSDILTTQQRDTMQDNLIKLQQEMAELEAVLEQHGSQPSNSYPSIISDSSALEDLQNPEQSTSEKAVLTSQKSSEYPISQNPEGLSADKFEVSADSSTSKNKEPGVERSSPSKCPSLDDRWYMHSCSGSLQNRNYPSQEELIKVVDVEEQQLEESGPHDLTETSYLPRQDLEGTPYLESGISLFSDDPESDPSEDKAPESAHVGNIPSSTSALKVPQLKVAESAQSPAAAHTTNTAGYNAMEESVSREKPELTASTERVNKRMSMVVSGLTPEEFMLVYKFARKHHITLTNLITEETTHVVMKTDAEFVCERTLKYFLGIAGGKWVVSYFWVTQSIKERKMLNEHDFEVRGDVVNGRNHQGPKRARESQDRKIFRGLEICCYGPFTNMPTDQLEWMVQLCGASVVKELSSFTLGTGVHPIVVVQPDAWTEDNGFHAIGQMCEAPVVTREWVLDSVALYQCQELDTYLIPQIPHSHY.

Met1 is modified (N-acetylmethionine). The segment at 24–65 (CPICLELIKEPVSTKCDHIFCKFCMLKLLNQKKGPSQCPLCK) adopts an RING-type zinc-finger fold. Residue Lys109 forms a Glycyl lysine isopeptide (Lys-Gly) (interchain with G-Cter in SUMO2) linkage. Ser114 carries the post-translational modification Phosphoserine. Positions 230–267 (ETDVTNTEHHQPSNNDLNTTEKRATERHPEKYQGSSVS) are disordered. The span at 248-260 (TTEKRATERHPEK) shows a compositional bias: basic and acidic residues. Lys301 is covalently cross-linked (Glycyl lysine isopeptide (Lys-Gly) (interchain with G-Cter in SUMO2)). Residues 306 to 338 (NKSKQPGLARSQHNRWAGSKETCNDRRTPSTEK) are disordered. The span at 327-338 (TCNDRRTPSTEK) shows a compositional bias: basic and acidic residues. A Glycyl lysine isopeptide (Lys-Gly) (interchain with G-Cter in SUMO2) cross-link involves residue Lys339. 4 positions are modified to phosphoserine: Ser395, Ser398, Ser423, and Ser434. Residues Lys443, Lys459, and Lys519 each participate in a glycyl lysine isopeptide (Lys-Gly) (interchain with G-Cter in SUMO2) cross-link. Ser551 bears the Phosphoserine mark. Glycyl lysine isopeptide (Lys-Gly) (interchain with G-Cter in SUMO2) cross-links involve residues Lys583 and Lys654. The disordered stretch occupies residues 650 to 739 (IKKKKYNQMP…EKEEKLETVK (90 aa)). Residues Ser694, Ser708, and Ser725 each carry the phosphoserine modification. Positions 705–716 (APGSFTNCSNTS) are enriched in polar residues. Residues 727 to 737 (PREEKEEKLET) are compositionally biased toward basic and acidic residues. Residues Lys734 and Lys739 each participate in a glycyl lysine isopeptide (Lys-Gly) (interchain with G-Cter in SUMO2) cross-link. Phosphoserine occurs at positions 753 and 840. A disordered region spans residues 896 to 915 (SPKVTFEREQKEQNQGKNES). Residues 900–909 (TFEREQKEQN) are compositionally biased toward basic and acidic residues. Residues Lys918 and Lys987 each participate in a glycyl lysine isopeptide (Lys-Gly) (interchain with G-Cter in SUMO2) cross-link. Ser988 is modified (phosphoserine; by CHEK2). Ser1009 bears the Phosphoserine mark. A Glycyl lysine isopeptide (Lys-Gly) (interchain with G-Cter in SUMO2) cross-link involves residue Lys1079. Phosphoserine is present on residues Ser1143, Ser1189, Ser1191, Ser1211, Ser1217, Ser1218, Ser1280, Ser1328, Ser1336, Ser1342, and Ser1387. Positions 1181-1216 (VQRGELSRSPSPFTHTHLAQGYRRGAKKLESSEENL) are disordered. Residues 1322-1395 (KQMRHQSESQ…SSQSDILTTQ (74 aa)) form a disordered region. A compositionally biased stretch (polar residues) spans 1373–1395 (ESETSVSEDCSGLSSQSDILTTQ). Thr1394 bears the Phosphothreonine mark. The interval 1397-1424 (RDTMQDNLIKLQQEMAELEAVLEQHGSQ) is interaction with PALB2. Ser1423, Ser1457, Ser1524, and Ser1542 each carry phosphoserine. The segment at 1440-1505 (EDLQNPEQST…SSPSKCPSLD (66 aa)) is disordered. Residues 1444 to 1470 (NPEQSTSEKAVLTSQKSSEYPISQNPE) show a composition bias toward polar residues. A disordered region spans residues 1565–1642 (ESGISLFSDD…SREKPELTAS (78 aa)). Over residues 1610-1624 (SAQSPAAAHTTNTAG) the composition is skewed to polar residues. 2 consecutive BRCT domains span residues 1642–1736 (STER…DFEV) and 1756–1855 (QDRK…TYLI).

Heterodimer with BARD1. Part of the BRCA1-associated genome surveillance complex (BASC), which contains BRCA1, MSH2, MSH6, MLH1, ATM, BLM, PMS2 and the MRE11-RAD50-NBN protein (MRN) complex. This association could be a dynamic process changing throughout the cell cycle and within subnuclear domains. Component of the BRCA1-A complex, at least composed of BRCA1, BARD1, UIMC1/RAP80, ABRAXAS1, BRCC3/BRCC36, BABAM2 and BABAM1/NBA1. Interacts (via the BRCT domains) with ABRAXAS1 (phosphorylated form); this is important for recruitment to sites of DNA damage. Can form a heterotetramer with two molecules of ABRAXAS1 (phosphorylated form). Component of the BRCA1-RBBP8 complex. Interacts (via the BRCT domains) with RBBP8 ('Ser-327' phosphorylated form); the interaction ubiquitinates RBBP8, regulates CHEK1 activation, and involves RBBP8 in BRCA1-dependent G2/M checkpoint control on DNA damage. Associates with RNA polymerase II holoenzyme. Interacts with SMC1A, NELFB, DCLRE1C, CLSPN. CHEK1, CHEK2, BAP1, BRCC3, UBXN1 and PCLAF. Interacts (via BRCT domains) with BRIP1 (phosphorylated form). Interacts with FANCD2 (ubiquitinated form). Interacts with H2AX (phosphorylated on 'Ser-140'). Interacts (via the BRCT domains) with ACACA (phosphorylated form); the interaction prevents dephosphorylation of ACACA. Part of a BRCA complex containing BRCA1, BRCA2 and PALB2. Interacts directly with PALB2; the interaction is essential for its function in HRR. Interacts directly with BRCA2; the interaction occurs only in the presence of PALB2 which serves as the bridging protein. Interacts (via the BRCT domains) with LMO4; the interaction represses the transcriptional activity of BRCA1. Interacts (via the BRCT domains) with CCAR2 (via N-terminus); the interaction represses the transcriptional activator activity of BRCA1. Interacts with EXD2. Interacts (via C-terminus) with DHX9; this interaction is direct and links BRCA1 to the RNA polymerase II holoenzyme. Interacts with DNA helicase ZGRF1; the interaction is increased following DNA damage induction. Post-translationally, phosphorylated in response to IR, UV, and various stimuli that cause checkpoint activation, probably by ATM or ATR. Phosphorylation at Ser-988 by CHEK2 regulates mitotic spindle assembly. Phosphorylation by AURKA regulates centrosomal microtubule nucleation. In terms of processing, autoubiquitinated, undergoes 'Lys-6'-linked polyubiquitination. 'Lys-6'-linked polyubiquitination does not promote degradation.

Its subcellular location is the nucleus. The protein resides in the chromosome. It is found in the cytoplasm. The enzyme catalyses S-ubiquitinyl-[E2 ubiquitin-conjugating enzyme]-L-cysteine + [acceptor protein]-L-lysine = [E2 ubiquitin-conjugating enzyme]-L-cysteine + N(6)-ubiquitinyl-[acceptor protein]-L-lysine.. In terms of biological role, E3 ubiquitin-protein ligase that specifically mediates the formation of 'Lys-6'-linked polyubiquitin chains and plays a central role in DNA repair by facilitating cellular responses to DNA damage. It is unclear whether it also mediates the formation of other types of polyubiquitin chains. The BRCA1-BARD1 heterodimer coordinates a diverse range of cellular pathways such as DNA damage repair, ubiquitination and transcriptional regulation to maintain genomic stability. Regulates centrosomal microtubule nucleation. Required for appropriate cell cycle arrests after ionizing irradiation in both the S-phase and the G2 phase of the cell cycle. Required for FANCD2 targeting to sites of DNA damage. Inhibits lipid synthesis by binding to inactive phosphorylated ACACA and preventing its dephosphorylation. Contributes to homologous recombination repair (HRR) via its direct interaction with PALB2, fine-tunes recombinational repair partly through its modulatory role in the PALB2-dependent loading of BRCA2-RAD51 repair machinery at DNA breaks. Component of the BRCA1-RBBP8 complex which regulates CHEK1 activation and controls cell cycle G2/M checkpoints on DNA damage via BRCA1-mediated ubiquitination of RBBP8. Acts as a transcriptional activator. This is Breast cancer type 1 susceptibility protein homolog (BRCA1) from Pan troglodytes (Chimpanzee).